The chain runs to 97 residues: Exodeoxyribonuclease 7 small subunit (97 aa).

Residues 1 to 22 (MAKTASPGATPPGNGTEPLPDN) are disordered.

It belongs to the XseB family. As to quaternary structure, heterooligomer composed of large and small subunits.

It is found in the cytoplasm. It catalyses the reaction Exonucleolytic cleavage in either 5'- to 3'- or 3'- to 5'-direction to yield nucleoside 5'-phosphates.. Bidirectionally degrades single-stranded DNA into large acid-insoluble oligonucleotides, which are then degraded further into small acid-soluble oligonucleotides. This Burkholderia lata (strain ATCC 17760 / DSM 23089 / LMG 22485 / NCIMB 9086 / R18194 / 383) protein is Exodeoxyribonuclease 7 small subunit.